We begin with the raw amino-acid sequence, 427 residues long: Histidinol dehydrogenase (427 aa).

Residues Tyr127, Gln187, and Asn210 each contribute to the NAD(+) site. Substrate contacts are provided by Ser233, Gln255, and His258. Gln255 and His258 together coordinate Zn(2+). Catalysis depends on proton acceptor residues Glu323 and His324. Substrate-binding residues include His324, Asp357, Glu411, and His416. Asp357 is a binding site for Zn(2+). His416 provides a ligand contact to Zn(2+).

Belongs to the histidinol dehydrogenase family. It depends on Zn(2+) as a cofactor.

The catalysed reaction is L-histidinol + 2 NAD(+) + H2O = L-histidine + 2 NADH + 3 H(+). Its pathway is amino-acid biosynthesis; L-histidine biosynthesis; L-histidine from 5-phospho-alpha-D-ribose 1-diphosphate: step 9/9. Its function is as follows. Catalyzes the sequential NAD-dependent oxidations of L-histidinol to L-histidinaldehyde and then to L-histidine. The polypeptide is Histidinol dehydrogenase (Streptococcus mutans serotype c (strain ATCC 700610 / UA159)).